Here is an 824-residue protein sequence, read N- to C-terminus: Glycerol-3-phosphate acyltransferase (824 aa).

An HXXXXD motif motif is present at residues 302–307 (CHRSHM).

This sequence belongs to the GPAT/DAPAT family.

Its subcellular location is the cell inner membrane. The enzyme catalyses sn-glycerol 3-phosphate + an acyl-CoA = a 1-acyl-sn-glycero-3-phosphate + CoA. It participates in phospholipid metabolism; CDP-diacylglycerol biosynthesis; CDP-diacylglycerol from sn-glycerol 3-phosphate: step 1/3. The polypeptide is Glycerol-3-phosphate acyltransferase (Actinobacillus pleuropneumoniae serotype 5b (strain L20)).